Consider the following 404-residue polypeptide: Cysteine desulfurase IscS (404 aa).

Pyridoxal 5'-phosphate-binding positions include 75-76 (AT), asparagine 155, glutamine 183, and 203-205 (SGH). Residue lysine 206 is modified to N6-(pyridoxal phosphate)lysine. Pyridoxal 5'-phosphate is bound at residue threonine 243. Cysteine 328 (cysteine persulfide intermediate) is an active-site residue. Cysteine 328 contributes to the [2Fe-2S] cluster binding site.

This sequence belongs to the class-V pyridoxal-phosphate-dependent aminotransferase family. NifS/IscS subfamily. Homodimer. Forms a heterotetramer with IscU, interacts with other sulfur acceptors. The cofactor is pyridoxal 5'-phosphate.

Its subcellular location is the cytoplasm. It carries out the reaction (sulfur carrier)-H + L-cysteine = (sulfur carrier)-SH + L-alanine. The protein operates within cofactor biosynthesis; iron-sulfur cluster biosynthesis. Functionally, master enzyme that delivers sulfur to a number of partners involved in Fe-S cluster assembly, tRNA modification or cofactor biosynthesis. Catalyzes the removal of elemental sulfur atoms from cysteine to produce alanine. Functions as a sulfur delivery protein for Fe-S cluster synthesis onto IscU, an Fe-S scaffold assembly protein, as well as other S acceptor proteins. This is Cysteine desulfurase IscS from Klebsiella pneumoniae subsp. pneumoniae (strain ATCC 700721 / MGH 78578).